A 491-amino-acid polypeptide reads, in one-letter code: Cyclin-A1-3 (491 aa).

Positions 1 to 21 are enriched in low complexity; the sequence is MSSSLASRRSSSSSAAKRPAA. 2 disordered regions span residues 1–32 and 69–106; these read MSSS…AAGA and SLAS…QKES. Positions 75–91 are enriched in polar residues; the sequence is NVGTNRVSAVKSASTKP.

Belongs to the cyclin family. Cyclin AB subfamily.

In Oryza sativa subsp. japonica (Rice), this protein is Cyclin-A1-3 (CYCA1-3).